A 169-amino-acid chain; its full sequence is ATP synthase subunit b (169 aa).

The helical transmembrane segment at isoleucine 11–phenylalanine 31 threads the bilayer.

It belongs to the ATPase B chain family. In terms of assembly, F-type ATPases have 2 components, F(1) - the catalytic core - and F(0) - the membrane proton channel. F(1) has five subunits: alpha(3), beta(3), gamma(1), delta(1), epsilon(1). F(0) has three main subunits: a(1), b(2) and c(10-14). The alpha and beta chains form an alternating ring which encloses part of the gamma chain. F(1) is attached to F(0) by a central stalk formed by the gamma and epsilon chains, while a peripheral stalk is formed by the delta and b chains.

It is found in the cell membrane. In terms of biological role, f(1)F(0) ATP synthase produces ATP from ADP in the presence of a proton or sodium gradient. F-type ATPases consist of two structural domains, F(1) containing the extramembraneous catalytic core and F(0) containing the membrane proton channel, linked together by a central stalk and a peripheral stalk. During catalysis, ATP synthesis in the catalytic domain of F(1) is coupled via a rotary mechanism of the central stalk subunits to proton translocation. Functionally, component of the F(0) channel, it forms part of the peripheral stalk, linking F(1) to F(0). The protein is ATP synthase subunit b of Dehalococcoides mccartyi (strain ATCC BAA-2266 / KCTC 15142 / 195) (Dehalococcoides ethenogenes (strain 195)).